The following is a 257-amino-acid chain: 1-(5-phosphoribosyl)-5-[(5-phosphoribosylamino)methylideneamino] imidazole-4-carboxamide isomerase (257 aa).

Catalysis depends on Asp8, which acts as the Proton acceptor. Asp129 acts as the Proton donor in catalysis.

This sequence belongs to the HisA/HisF family.

The protein resides in the cytoplasm. The enzyme catalyses 1-(5-phospho-beta-D-ribosyl)-5-[(5-phospho-beta-D-ribosylamino)methylideneamino]imidazole-4-carboxamide = 5-[(5-phospho-1-deoxy-D-ribulos-1-ylimino)methylamino]-1-(5-phospho-beta-D-ribosyl)imidazole-4-carboxamide. It participates in amino-acid biosynthesis; L-histidine biosynthesis; L-histidine from 5-phospho-alpha-D-ribose 1-diphosphate: step 4/9. This Nostoc punctiforme (strain ATCC 29133 / PCC 73102) protein is 1-(5-phosphoribosyl)-5-[(5-phosphoribosylamino)methylideneamino] imidazole-4-carboxamide isomerase.